The sequence spans 345 residues: Uroporphyrinogen decarboxylase (345 aa).

Substrate-binding positions include 27–31, Phe46, Asp76, Tyr152, Ser207, and His320; that span reads RQAGR.

The protein belongs to the uroporphyrinogen decarboxylase family. In terms of assembly, homodimer.

It localises to the cytoplasm. It carries out the reaction uroporphyrinogen III + 4 H(+) = coproporphyrinogen III + 4 CO2. It functions in the pathway porphyrin-containing compound metabolism; protoporphyrin-IX biosynthesis; coproporphyrinogen-III from 5-aminolevulinate: step 4/4. Functionally, catalyzes the decarboxylation of four acetate groups of uroporphyrinogen-III to yield coproporphyrinogen-III. In Geobacillus sp. (strain WCH70), this protein is Uroporphyrinogen decarboxylase.